The chain runs to 118 residues: Class I hydrophobin hum2 (118 aa).

The N-terminal stretch at 1-19 (MQFKTIFATLAAFAAVASA) is a signal peptide. 4 disulfide bridges follow: cysteine 33/cysteine 98, cysteine 40/cysteine 92, cysteine 41/cysteine 74, and cysteine 99/cysteine 112.

Belongs to the fungal hydrophobin family. Self-assembles to form functional amyloid fibrils called rodlets. Self-assembly into fibrillar rodlets occurs spontaneously at hydrophobic:hydrophilic interfaces and the rodlets further associate laterally to form amphipathic monolayers.

The protein localises to the secreted. It is found in the cell wall. Functionally, aerial growth, conidiation, and dispersal of filamentous fungi in the environment rely upon a capability of their secreting small amphipathic proteins called hydrophobins (HPBs) with low sequence identity. Class I can self-assemble into an outermost layer of rodlet bundles on aerial cell surfaces, conferring cellular hydrophobicity that supports fungal growth, development and dispersal; whereas Class II form highly ordered films at water-air interfaces through intermolecular interactions but contribute nothing to the rodlet structure. Hum2 is a class I hydrophobin which that plays a role in, but seems not to be crucial for the formation of aerial hyphae. Hydrophobins of Mycosarcoma maydis have been functionally replaced, at least partially, by repellents. The chain is Class I hydrophobin hum2 from Mycosarcoma maydis (Corn smut fungus).